The sequence spans 467 residues: Sodium-dependent phosphate transport protein 1 (467 aa).

Residues N41, N49, and N58 are each glycosylated (N-linked (GlcNAc...) asparagine). The next 10 helical transmembrane spans lie at 81 to 101 (GIIL…VGYF), 119 to 139 (SVLS…VVVC), 178 to 198 (FLLG…SLGW), 200 to 220 (MVFY…FVLF), 257 to 277 (AILK…FFWS), 301 to 321 (GFLS…AGQL), 339 to 359 (LFTA…PYLS), 365 to 385 (IVIF…GVFI), 401 to 421 (CSTL…GLIL), and 433 to 453 (FILM…VATA).

This sequence belongs to the major facilitator superfamily. Sodium/anion cotransporter family. As to quaternary structure, interacts with PDZK1. Expressed in kidney cortex, liver and brain but not in other tissues.

The protein localises to the apical cell membrane. The enzyme catalyses 3 Na(+)(out) + phosphate(out) = 3 Na(+)(in) + phosphate(in). It catalyses the reaction urate(out) = urate(in). Its function is as follows. Important for the resorption of phosphate by the kidney. May be involved in actively transporting phosphate into cells via Na(+) cotransport in the renal brush border membrane. Plays a role in urate transport in the kidney. This chain is Sodium-dependent phosphate transport protein 1 (SLC17A1), found in Homo sapiens (Human).